The primary structure comprises 407 residues: uncharacterized protein (407 aa).

Disordered stretches follow at residues S73–G93 and S116–S202. 5 consecutive repeat copies span residues G112 to S116, G117 to S121, G122 to N126, G127 to S131, and G132 to D136. Residues G112–D136 form a 5 X 5 AA tandem repeats of G-[S]-[IV]-R-[DNS] region. Residues S116–G132 are compositionally biased toward low complexity. Positions N187 to S202 are enriched in basic and acidic residues.

This sequence belongs to the asfivirus B407L family.

This is an uncharacterized protein from Ornithodoros (relapsing fever ticks).